The following is a 208-amino-acid chain: Na(+)-translocating NADH-quinone reductase subunit D (208 aa).

A run of 5 helical transmembrane segments spans residues 42-62 (FVMA…VSLI), 72-92 (IIVQ…ILKA), 103-123 (VFVG…AFAM), 131-151 (FVDG…VAFF), and 178-198 (NGLF…IWGL).

Belongs to the NqrDE/RnfAE family. In terms of assembly, composed of six subunits; NqrA, NqrB, NqrC, NqrD, NqrE and NqrF.

The protein localises to the cell inner membrane. The enzyme catalyses a ubiquinone + n Na(+)(in) + NADH + H(+) = a ubiquinol + n Na(+)(out) + NAD(+). NQR complex catalyzes the reduction of ubiquinone-1 to ubiquinol by two successive reactions, coupled with the transport of Na(+) ions from the cytoplasm to the periplasm. NqrA to NqrE are probably involved in the second step, the conversion of ubisemiquinone to ubiquinol. The chain is Na(+)-translocating NADH-quinone reductase subunit D from Haemophilus influenzae (strain 86-028NP).